A 419-amino-acid chain; its full sequence is Zinc metalloproteinase-disintegrin-like atrolysin-A (419 aa).

The region spanning 6 to 202 is the Peptidase M12B domain; the sequence is RYVELVIVAD…YNPQCILNEP (197 aa). Glutamate 9 contributes to the Ca(2+) binding site. Asparagine 72 is a glycosylation site (N-linked (GlcNAc...) asparagine). Residue aspartate 93 coordinates Ca(2+). Intrachain disulfides connect cysteine 117–cysteine 197, cysteine 157–cysteine 181, and cysteine 159–cysteine 164. Histidine 142 lines the Zn(2+) pocket. Glutamate 143 is an active-site residue. Zn(2+) contacts are provided by histidine 146 and histidine 152. Residues cysteine 197, asparagine 200, valine 212, asparagine 215, leucine 217, glutamate 219, glutamate 222, and aspartate 225 each contribute to the Ca(2+) site. The Disintegrin domain maps to 210 to 296; it reads PPVCGNELLE…DCPTDDFHRN (87 aa). Disulfide bonds link cysteine 213–cysteine 242, cysteine 224–cysteine 237, cysteine 226–cysteine 232, cysteine 236–cysteine 259, cysteine 250–cysteine 256, cysteine 255–cysteine 281, cysteine 268–cysteine 288, cysteine 275–cysteine 307, cysteine 300–cysteine 312, cysteine 319–cysteine 369, cysteine 334–cysteine 376, cysteine 347–cysteine 357, cysteine 364–cysteine 398, and cysteine 392–cysteine 403. Positions 274 to 276 match the D/ECD-tripeptide motif; the sequence is ECD. N-linked (GlcNAc...) asparagine glycans are attached at residues asparagine 326, asparagine 338, and asparagine 342.

Belongs to the venom metalloproteinase (M12B) family. P-III subfamily. P-IIIa sub-subfamily. Monomer. Zn(2+) serves as cofactor. As to expression, expressed by the venom gland.

It is found in the secreted. It catalyses the reaction Cleavage of 3-Asn-|-Gln-4, 5-His-|-Leu-6, 10-His-|-Leu-11, 14-Ala-|-Leu-15 and 16-Tyr-|-Leu-17 in insulin B chain. Removes C-terminal Leu from small peptides.. In terms of biological role, snake venom zinc metalloproteinase-disintegrin that causes hemorrhage by provoking the degradation of the sub-endothelial matrix proteins (fibronectin, laminin, type IV collagen, nidogen, and gelatins) and disturbances in platelet function. The recombinant cysteine-rich domain interacts with the alpha-2/beta-1 integrin (ITGA2/ITGB1) (collagen receptor), and inhibits the platelet aggregation induced by collagen. This is Zinc metalloproteinase-disintegrin-like atrolysin-A from Crotalus atrox (Western diamondback rattlesnake).